Reading from the N-terminus, the 402-residue chain is ORC1-type DNA replication protein 17 (402 aa).

Y223 and R235 together coordinate ATP.

Belongs to the CDC6/cdc18 family.

In terms of biological role, involved in regulation of DNA replication. The protein is ORC1-type DNA replication protein 17 (cdc6q) of Haloarcula marismortui (strain ATCC 43049 / DSM 3752 / JCM 8966 / VKM B-1809) (Halobacterium marismortui).